The primary structure comprises 307 residues: Myeloid-associated differentiation marker homolog (307 aa).

2 MARVEL domains span residues 15 to 148 (TLKS…AKPG) and 153 to 304 (YMAT…RLIF). Helical transmembrane passes span 19–39 (PVGILRILEVIFACVTFSLVV), 51–71 (LCMFCWCFCFAVSLVILIVEF), 85–105 (FPITFAMYAVLMCLSATVIYP), 123–143 (IVAIVFSCLTTLAYIIEVSLT), 156–176 (TTPGLLKVLETFIACIIFVFI), 190–210 (WCLAVYCICFILSIVVIILCV), 228–248 (YALLAVLMYASAMIIWPIFSF), and 278–298 (MVAVAVLTAVNLIAYVMDLVY).

This sequence belongs to the MAL family.

The protein resides in the membrane. The polypeptide is Myeloid-associated differentiation marker homolog (myadm) (Xenopus laevis (African clawed frog)).